A 714-amino-acid chain; its full sequence is Polyribonucleotide nucleotidyltransferase (714 aa).

Asp-487 and Asp-493 together coordinate Mg(2+). The KH domain maps to 554 to 613 (PRIEVMTIPVDKIREVIGSGGKVIREIVEKTGAKINIEDDGTIKIASASGKEIEAARKWI). One can recognise an S1 motif domain in the interval 623–691 (GVVYEGTVVK…ERGKVRLSMK (69 aa)).

Belongs to the polyribonucleotide nucleotidyltransferase family. It depends on Mg(2+) as a cofactor.

It is found in the cytoplasm. The catalysed reaction is RNA(n+1) + phosphate = RNA(n) + a ribonucleoside 5'-diphosphate. Functionally, involved in mRNA degradation. Catalyzes the phosphorolysis of single-stranded polyribonucleotides processively in the 3'- to 5'-direction. The chain is Polyribonucleotide nucleotidyltransferase from Allorhizobium ampelinum (strain ATCC BAA-846 / DSM 112012 / S4) (Agrobacterium vitis (strain S4)).